Consider the following 525-residue polypeptide: GMP synthase [glutamine-hydrolyzing] (525 aa).

A Glutamine amidotransferase type-1 domain is found at Arg-9 to Leu-207. The Nucleophile role is filled by Cys-86. Active-site residues include His-181 and Glu-183. Residues Trp-208 to Arg-400 form the GMPS ATP-PPase domain. Ser-235–Ser-241 lines the ATP pocket.

As to quaternary structure, homodimer.

It carries out the reaction XMP + L-glutamine + ATP + H2O = GMP + L-glutamate + AMP + diphosphate + 2 H(+). It participates in purine metabolism; GMP biosynthesis; GMP from XMP (L-Gln route): step 1/1. Catalyzes the synthesis of GMP from XMP. This chain is GMP synthase [glutamine-hydrolyzing], found in Pseudomonas aeruginosa (strain LESB58).